The primary structure comprises 565 residues: Polycomb protein EED (565 aa).

WD repeat units follow at residues 89 to 133 (DDGN…LYRT), 136 to 176 (GHGG…EKQP), 185 to 224 (GHSYDLLSVAFHDNGRYVLSAGHDQVINLWALPEFPNEHM), and 240 to 278 (IHNNLVDCVAFYGDLILSRACHEDTIVLWRIEGFSSDDP). The tract at residues 417–488 (VKKAPGAAGS…SASPDPDSPF (72 aa)) is disordered. Over residues 429-450 (GTAANGGHNNNNNNNNNNNNNN) the composition is skewed to low complexity. Over residues 451-468 (HETGSQRSFSATNNLSNS) the composition is skewed to polar residues. One copy of the WD 5 repeat lies at 519-559 (IDGAFVGRQVGWSPEGEWCVVVGNGNRALIYQRWGKERGLG).

It belongs to the WD repeat ESC family. As to quaternary structure, component of the polycomb repressive complex 2 (PRC2) that consists of four core subunits icluding EZH2, EED, SUZ12, and RBBP4, among which EZH2 is the catalytic subunit and which minimally requires EED and SUZ12 for catalysis.

Its subcellular location is the nucleus. Component of the of the Polycomb Repressive Complex 2 (PRC2), a histone H3 lysine methyltransferase responsible for generating mono-, di-, and tri-methylation on Lys27 (H3K27me1, H3K27me2 and H3K27me3). The tri-methylated form is known to be critical in gene repression, and its proper placement is essential in defining repression patterns during development. EED is not a catalytic subunit but is required for the complex regulation of histone H3 lysine methylation by EZH2. The sequence is that of Polycomb protein EED from Chaetomium thermophilum (strain DSM 1495 / CBS 144.50 / IMI 039719) (Thermochaetoides thermophila).